Here is a 438-residue protein sequence, read N- to C-terminus: Exodeoxyribonuclease 7 large subunit (438 aa).

Residues 405-438 are disordered; it reads GATSTGPTDDIPSSAARLPSSPAPDARPASGAES.

This sequence belongs to the XseA family. In terms of assembly, heterooligomer composed of large and small subunits.

The protein resides in the cytoplasm. The catalysed reaction is Exonucleolytic cleavage in either 5'- to 3'- or 3'- to 5'-direction to yield nucleoside 5'-phosphates.. Functionally, bidirectionally degrades single-stranded DNA into large acid-insoluble oligonucleotides, which are then degraded further into small acid-soluble oligonucleotides. In Clavibacter michiganensis subsp. michiganensis (strain NCPPB 382), this protein is Exodeoxyribonuclease 7 large subunit.